The sequence spans 173 residues: Translation initiation factor IF-3 (173 aa).

The protein belongs to the IF-3 family. As to quaternary structure, monomer.

The protein resides in the cytoplasm. IF-3 binds to the 30S ribosomal subunit and shifts the equilibrium between 70S ribosomes and their 50S and 30S subunits in favor of the free subunits, thus enhancing the availability of 30S subunits on which protein synthesis initiation begins. The chain is Translation initiation factor IF-3 from Parvibaculum lavamentivorans (strain DS-1 / DSM 13023 / NCIMB 13966).